A 91-amino-acid polypeptide reads, in one-letter code: Small ribosomal subunit protein uS19 (91 aa).

It belongs to the universal ribosomal protein uS19 family.

Protein S19 forms a complex with S13 that binds strongly to the 16S ribosomal RNA. In Azoarcus sp. (strain BH72), this protein is Small ribosomal subunit protein uS19.